A 563-amino-acid chain; its full sequence is MSGKQMDVIASIQEYINKILTNIQGMKVLVLDKETAGIVSMVYTQSEILQKEVFLFEKIENTKEKMLHMKGVYFIRPTQENIQSICDELKDPKFNKYHLFFTNTISKVSLDEIAKADEQDVVSEIQEYFGDFFAVNPDTFTLNLPGMLTKKSPRWQGDVGRVVDGLFSSLLALKKKPVIRYSSNSDTTRYLAEKITERMNRDRDLFDFRRQGEPLLLILDRKDDPITPLLHQWTYQAMIHELLTINNNRVSLAKAPGIKDELKEVVLSLDHDIFYKENLYKNFGDLGASIKDLVDQFQDKMNTNQNIQTIDDMKKFIENYPNFQKFSTTVSKHVSLMDELNRLISLDNLMEVSEVQQELACNHDHNSIYNHVLEIVNDSKYTDRDKLVLVLLYSIRYEDGRVWELKEKLSSIGIPPKEIGLIDTLRGYAGASLREGDLLGTKNIFSFARSVVKRGLQGVSNIYTQHKPLLHDILDSILKNKLKETSYPYLSTTQSRERPQDVIIFMVGGITYEEALTVYTFNSLNTGVCRVVLGGTSILNREQFLEDLSSTQISNPSSSSGRR.

Belongs to the STXBP/unc-18/SEC1 family.

The protein resides in the golgi apparatus membrane. It is found in the endosome membrane. In terms of biological role, may play a role in vesicle-mediated protein trafficking from the Golgi stack through the trans-Golgi network. This Dictyostelium discoideum (Social amoeba) protein is Vacuolar protein sorting-associated protein 45 (vps45).